The chain runs to 412 residues: NADH-quinone oxidoreductase subunit D (412 aa).

Belongs to the complex I 49 kDa subunit family. In terms of assembly, NDH-1 is composed of 14 different subunits. Subunits NuoB, C, D, E, F, and G constitute the peripheral sector of the complex.

It is found in the cell inner membrane. It catalyses the reaction a quinone + NADH + 5 H(+)(in) = a quinol + NAD(+) + 4 H(+)(out). Its function is as follows. NDH-1 shuttles electrons from NADH, via FMN and iron-sulfur (Fe-S) centers, to quinones in the respiratory chain. The immediate electron acceptor for the enzyme in this species is believed to be a menaquinone. Couples the redox reaction to proton translocation (for every two electrons transferred, four hydrogen ions are translocated across the cytoplasmic membrane), and thus conserves the redox energy in a proton gradient. This Flavobacterium psychrophilum (strain ATCC 49511 / DSM 21280 / CIP 103535 / JIP02/86) protein is NADH-quinone oxidoreductase subunit D.